Here is a 185-residue protein sequence, read N- to C-terminus: Tetrahydromethanopterin S-methyltransferase subunit A 2 (185 aa).

The Cytoplasmic portion of the chain corresponds to 1–21 (MVDKKVDKKPVPEDWPHIVGD). The helical transmembrane segment at 22-38 (YVVGDAESPVAVVTLGS) threads the bilayer. Residues 39–185 (HMEDEPVRAG…LNKNKPDENT (147 aa)) are Extracellular-facing. 5-hydroxybenzimidazolylcob(I)amide is bound at residue His88.

It belongs to the MtrA family. As to quaternary structure, the complex is composed of 8 subunits; MtrA, MtrB, MtrC, MtrD, MtrE, MtrF, MtrG and MtrH. Requires 5-hydroxybenzimidazolylcob(I)amide as cofactor.

The protein localises to the cell membrane. It catalyses the reaction 5-methyl-5,6,7,8-tetrahydromethanopterin + coenzyme M + 2 Na(+)(in) = 5,6,7,8-tetrahydromethanopterin + methyl-coenzyme M + 2 Na(+)(out). It functions in the pathway one-carbon metabolism; methanogenesis from CO(2); methyl-coenzyme M from 5,10-methylene-5,6,7,8-tetrahydromethanopterin: step 2/2. Part of a complex that catalyzes the formation of methyl-coenzyme M and tetrahydromethanopterin from coenzyme M and methyl-tetrahydromethanopterin. This is an energy-conserving, sodium-ion translocating step. This is Tetrahydromethanopterin S-methyltransferase subunit A 2 from Methanothermobacter marburgensis (strain ATCC BAA-927 / DSM 2133 / JCM 14651 / NBRC 100331 / OCM 82 / Marburg) (Methanobacterium thermoautotrophicum).